Here is a 142-residue protein sequence, read N- to C-terminus: Hemoglobin anodic subunit alpha (142 aa).

Serine 1 is subject to N-acetylserine. One can recognise a Globin domain in the interval 1–142 (SLSTKDKAVV…LALALADRYR (142 aa)). Histidine 59 lines the O2 pocket. Histidine 88 is a binding site for heme b.

This sequence belongs to the globin family. In terms of assembly, heterotetramer of two alpha chains and two beta chains. Red blood cells.

Its function is as follows. Involved in oxygen transport from gills to the various peripheral tissues. The sequence is that of Hemoglobin anodic subunit alpha from Gymnothorax unicolor (Brown moray).